Reading from the N-terminus, the 188-residue chain is Crossover junction endodeoxyribonuclease RuvC (188 aa).

Active-site residues include Asp7, Glu68, and Asp141. Residues Asp7, Glu68, and Asp141 each contribute to the Mg(2+) site.

Belongs to the RuvC family. As to quaternary structure, homodimer which binds Holliday junction (HJ) DNA. The HJ becomes 2-fold symmetrical on binding to RuvC with unstacked arms; it has a different conformation from HJ DNA in complex with RuvA. In the full resolvosome a probable DNA-RuvA(4)-RuvB(12)-RuvC(2) complex forms which resolves the HJ. Requires Mg(2+) as cofactor.

The protein resides in the cytoplasm. It carries out the reaction Endonucleolytic cleavage at a junction such as a reciprocal single-stranded crossover between two homologous DNA duplexes (Holliday junction).. Functionally, the RuvA-RuvB-RuvC complex processes Holliday junction (HJ) DNA during genetic recombination and DNA repair. Endonuclease that resolves HJ intermediates. Cleaves cruciform DNA by making single-stranded nicks across the HJ at symmetrical positions within the homologous arms, yielding a 5'-phosphate and a 3'-hydroxyl group; requires a central core of homology in the junction. The consensus cleavage sequence is 5'-(A/T)TT(C/G)-3'. Cleavage occurs on the 3'-side of the TT dinucleotide at the point of strand exchange. HJ branch migration catalyzed by RuvA-RuvB allows RuvC to scan DNA until it finds its consensus sequence, where it cleaves and resolves the cruciform DNA. This is Crossover junction endodeoxyribonuclease RuvC from Streptomyces coelicolor (strain ATCC BAA-471 / A3(2) / M145).